Here is a 78-residue protein sequence, read N- to C-terminus: HssA/B-like protein 30 (78 aa).

The tract at residues 1–32 (MTLFSSITSISKTNTSSKSSVNSLSGSSLSMG) is disordered.

It belongs to the hssA/B family.

The chain is HssA/B-like protein 30 (hssl30) from Dictyostelium discoideum (Social amoeba).